We begin with the raw amino-acid sequence, 71 residues long: SRY-related protein LG27 (71 aa).

The HMG box DNA-binding region spans 1–68 (VKRPMNAFMV…KHMADYPNYK (68 aa)).

It localises to the nucleus. This is SRY-related protein LG27 from Eublepharis macularius (Leopard gecko).